Consider the following 143-residue polypeptide: CRISPR-associated endoribonuclease Cas2 (143 aa).

Residue aspartate 14 participates in Mg(2+) binding.

Belongs to the CRISPR-associated endoribonuclease Cas2 protein family. Homodimer, forms a heterotetramer with a Cas1 homodimer. The cofactor is Mg(2+).

CRISPR (clustered regularly interspaced short palindromic repeat), is an adaptive immune system that provides protection against mobile genetic elements (viruses, transposable elements and conjugative plasmids). CRISPR clusters contain sequences complementary to antecedent mobile elements and target invading nucleic acids. CRISPR clusters are transcribed and processed into CRISPR RNA (crRNA). Functions as a ssRNA-specific endoribonuclease. Involved in the integration of spacer DNA into the CRISPR cassette. The chain is CRISPR-associated endoribonuclease Cas2 from Campylobacter jejuni subsp. jejuni serotype O:2 (strain ATCC 700819 / NCTC 11168).